A 488-amino-acid polypeptide reads, in one-letter code: Probable metabolite transport protein YBR241C (488 aa).

Residues Met1–Pro18 lie on the Cytoplasmic side of the membrane. A helical membrane pass occupies residues Leu19–Gly39. Residues Tyr40–Tyr87 are Vacuolar-facing. A glycan (N-linked (GlcNAc...) asparagine) is linked at Asn63. The chain crosses the membrane as a helical span at residues Gly88–Trp108. Topologically, residues Ala109 to Ala121 are cytoplasmic. The chain crosses the membrane as a helical span at residues Ser122 to Leu142. The Vacuolar portion of the chain corresponds to Phe143–Phe146. Residues Leu147 to Ala167 traverse the membrane as a helical segment. At Pro168 to Met178 the chain is on the cytoplasmic side. Residues Asn179 to Ala198 form a helical membrane-spanning segment. Residues Asp199–Arg204 lie on the Vacuolar side of the membrane. Residues Trp205 to Asp225 traverse the membrane as a helical segment. Residues Glu226–Val299 are Cytoplasmic-facing. A compositionally biased stretch (basic and acidic residues) spans Glu258–His279. The segment at Glu258–Gly281 is disordered. The chain crosses the membrane as a helical span at residues Ile300–Val320. The Vacuolar portion of the chain corresponds to Lys321–Val322. A helical transmembrane segment spans residues Ile323–Ala337. The Cytoplasmic segment spans residues Ile338–Val344. A helical membrane pass occupies residues Val345–Ala364. Residues Ser365–Thr390 are Vacuolar-facing. Residues Ala391 to Ile411 traverse the membrane as a helical segment. Topologically, residues Gly412–Asp419 are cytoplasmic. A helical transmembrane segment spans residues Ala420–Phe442. Residues Pro443–His446 lie on the Vacuolar side of the membrane. Residues Gly447 to Met463 traverse the membrane as a helical segment. The Cytoplasmic portion of the chain corresponds to Phe464 to Tyr488.

The protein belongs to the major facilitator superfamily. Sugar transporter (TC 2.A.1.1) family.

The protein resides in the vacuole membrane. The sequence is that of Probable metabolite transport protein YBR241C from Saccharomyces cerevisiae (strain ATCC 204508 / S288c) (Baker's yeast).